The chain runs to 359 residues: Mitochondrial glutathione transporter SLC25A39 (359 aa).

Residues 1–14 (MDDQDPGGISPLQQ) lie on the Mitochondrial intermembrane side of the membrane. 3 Solcar repeats span residues 9–151 (ISPL…LKAF), 159–243 (SDLY…VKSW), and 253–347 (TSVG…GKSF). The chain crosses the membrane as a helical span at residues 15-35 (MVASGAGAVVTSLFMTPLDVV). Topologically, residues 36-121 (KVRLQSQRPS…VKIVRHEGTR (86 aa)) are mitochondrial matrix. Positions 74, 78, 88, and 94 each coordinate [2Fe-2S] cluster. A helical transmembrane segment spans residues 122 to 142 (TLWSGLPATLVMTVPATAIYF). Topologically, residues 143–164 (TAYDQLKAFLCGQSLTSDLYAP) are mitochondrial intermembrane. Residues 165–185 (MVAGALARMGTVTVVSPLELV) form a helical membrane-spanning segment. Residues 186–214 (RTKLQAQHVSYRELASSVQAAVTQGGWRS) are Mitochondrial matrix-facing. The chain crosses the membrane as a helical span at residues 215–235 (LWLGWGPTALRDVPFSALYWF). Residues 236–255 (NYELVKSWLSGLRPKDQTSV) are Mitochondrial intermembrane-facing. Residues 256–276 (GISFVAGGISGMVAATLTLPF) traverse the membrane as a helical segment. The Mitochondrial matrix portion of the chain corresponds to 277–317 (DVVKTQRQMSLGAVEAVRVKPPRVDSTWLLLRRIRAESGTR). The chain crosses the membrane as a helical span at residues 318–338 (GLFAGFLPRIIKAAPSCAIMI). At 339–359 (STYEFGKSFFQRLNQEQPLGR) the chain is on the mitochondrial intermembrane side.

This sequence belongs to the mitochondrial carrier (TC 2.A.29) family. In terms of processing, cleaved and degraded by AFG3L2; degradation by AFG3L2 is regulated by the ability of SLC25A39 to bind iron-sulfur. In absence of mitochondrial glutathione, SLC25A39 binds iron-sulfur, preventing cleavage and degradation by AFG3L2. The presence of mitochondrial glutathione prevents iron-sulfur-binding to SLC25A39, promoting cleavage and degradation by AFG3L2. In terms of tissue distribution, abundant expression in bone marrow, spleen, testis and kidney.

The protein resides in the mitochondrion inner membrane. The enzyme catalyses glutathione(in) = glutathione(out). With respect to regulation, the activity of SLC25A39 is regulated by levels of mitochondrial glutathione via its ability to bind [2Fe-2S] iron-sulfur cluster. Upon physiological levels of mitochondrial glutathione, glutathione prevents iron-sulfur-binding to SLC25A39 promoting cleavage and degradation by AFG3L2. Upon depletion of mitochondrial glutathione, SLC25A39 binds iron-sulfur, preventing cleavage and degradation by AFG3L2. Functionally, mitochondrial transporter required for glutathione import into mitochondria. Glutathione, which plays key roles in oxidative metabolism, is produced exclusively in the cytosol and is imported in many organelles. Mitochondrial glutathione is required for the activity and stability of proteins containing iron-sulfur clusters, as well as erythropoiesis. This is Mitochondrial glutathione transporter SLC25A39 from Mus musculus (Mouse).